The sequence spans 546 residues: Immunoglobulin-like domain-containing receptor 1 (546 aa).

The N-terminal stretch at 1–23 (MAWPKLPAPWLLLCTWLPAGCLS) is a signal peptide. One can recognise an Ig-like V-type domain in the interval 24-162 (LLVTVQHTER…TSGDPDKEVK (139 aa)). Over 24–167 (LLVTVQHTER…DKEVKLIVLH (144 aa)) the chain is Extracellular. A disulfide bridge connects residues cysteine 45 and cysteine 145. Residues 168–188 (WLTVIFIILGALLLLLLIGVC) traverse the membrane as a helical segment. Over 189–546 (WCQCCPQYCC…SSHSGRSVVI (358 aa)) the chain is Cytoplasmic. A disordered region spans residues 399–546 (WSGRHRSSRL…SSHSGRSVVI (148 aa)). Residues 442 to 457 (RCQERPRRPSPRESTQ) show a composition bias toward basic and acidic residues. Over residues 458-467 (RHGRRRRHRS) the composition is skewed to basic residues. A phosphoserine mark is found at serine 499 and serine 501. Positions 527–539 (GSVERRSEKDSSH) are enriched in basic and acidic residues.

Belongs to the immunoglobulin superfamily. LISCH7 family. Homooligomer. Interacts with MARVELD2 and OCLN; the interaction is required to recruit MARVELD2 to tricellular contacts. Interacts (via C-terminus) with TRA2A, TRA2B and SRSF1. Interacts with PLSCR1. In terms of tissue distribution, mainly expressed in prostate and to a lower extent in testis, pancreas, kidney, heart and liver.

It localises to the cell membrane. Its subcellular location is the cell junction. It is found in the tight junction. The protein localises to the cytoplasm. The protein resides in the cytosol. Maintains epithelial barrier function by recruiting MARVELD2/tricellulin to tricellular tight junctions (tTJs). Crucial for normal hearing by maintaining the structural and functional integrity of tTJs, which are critical for the survival of auditory neurosensory HCs. Mediates fatty acids and lipoproteins-stimulated CCK/cholecystokinin secretion in the small intestine. In the inner ear, may regulate alternative pre-mRNA splicing via binding to TRA2A, TRA2B and SRSF1. Functionally, (Microbial infection) Promotes influenza virus infection by inhibiting viral nucleoprotein NP binding to PLSCR1 and thereby PLSCR1-mediated antiviral activity. The sequence is that of Immunoglobulin-like domain-containing receptor 1 from Homo sapiens (Human).